We begin with the raw amino-acid sequence, 198 residues long: Nicotinamidase 3 (198 aa).

It belongs to the isochorismatase family.

The enzyme catalyses nicotinamide + H2O = nicotinate + NH4(+). It functions in the pathway cofactor biosynthesis; nicotinate biosynthesis; nicotinate from nicotinamide: step 1/1. Its function is as follows. Catalyzes the deamidation of nicotinamide, an early step in the NAD(+) salvage pathway. Prevents the accumulation of intracellular nicotinamide, a known inhibitor of poly(ADP-ribose) polymerases (PARP enzymes). The polypeptide is Nicotinamidase 3 (Arabidopsis thaliana (Mouse-ear cress)).